We begin with the raw amino-acid sequence, 1255 residues long: MENLNRKKAIKIELANPDTIRSWSHGEVLKPETINYKTLKAEKDGLFDERIFGPTKNYECVCGRYKKANPMNKGKKCEKCGVELTESIVRRERMGHIELEEPVTHIWMLKVAPYRIAAILDLKAKELEEVVYFVSHIVLEQGNQKHFVEKEVLDLGSSRITKTREKLQLTILDVIDLINDPNHRDTKKANRLLEELKNTAVPFSIDEATSLISKYTGAKFGIGARAVEYLLEKVDLTKEIEAIKIQLENSKKTPNERTKLLKRLETFDSLKRSKQRPEWMVMRVIPVIPPDIRPIIQLDGGRFTTSEINDLYRRIIIRNERLKKVKEMGAPSIIVNNEKRMLQEAVDALFDNERKPKPVQRKNKRPLKSLTSVLKGKQGRFRQNLLGKRVDYSARSVIAIGPDLKMYQAGLPREMAITLFKPFVIQWLQDHEYAENVKIAEKMLLQNDPKVWEALEQVIKDRPVLLNRAPTLHRLGIQAFEPKLVKGKAIRLHPLVTTAFNADFDGDQMAVHVPITKEAVAESRALMLGSSAILGPKDGKAIVTPGQDIILGNYYLTTEEKNAKGQGMIFSSLDEAFMAYDSGQIHLNSLIGIALSALPEQKFSDKNQRLNSYLLTTVGKLYFNQIFDDNFPWINSNNIWNAKEAVKEFIYYFSQDINNVIENIQVQQPIKKKELSLIIERYFETHGARKTAEMLDKMKDLGFSFSTKSGTTISAGDVVAFTHKYDEFKEADQKVEQITDFYNMGMLTNSEKKRRIIEVWSDVKDKIQDELATVLRKDVKNPIFVMVDSGARGNISNFTQLVGMRGLMNDTKGDIKEIPIKSSFREGLTVSEYFVSTHGARKGMADIALKTADSGYLTRRLVDVSQEIVVVNEDCEPSKGFEVSAIIDTKHDNVIVPLKDRLVGRFTFEDIYDDDKNLVAFANTLIDKNIAEKIIMSGISSVVIRSVLTCDNKRGVCQKCYGLNLATASVVNIGEPVGVIAAQSIGEPGTQLTMRNFHTGGVAGNVDITQGLPRIKELLDVTTPKGAVAIISEVDGVVSEIEDYNGVFVINIVTENEEVKKYKTEFNSVLRVEQGSSVVAGQKLTEGAIDLHQLLEFGGIQDVQNYILKEVQKVYRLQGIEISDKYIEIIIKQMLNKVKITDGGDSDLLPGEVITIQNYKEVVQDCIVKSIRPPLSKAQIFGIKKAPLESSSWLSSASFQDTARVLTRAIIKGKEDKLEGLKENIMLGNLIPAGTGLTGTQEVEQLAEQYHNNEY.

Cys-60, Cys-62, Cys-77, and Cys-80 together coordinate Zn(2+). 3 residues coordinate Mg(2+): Asp-503, Asp-505, and Asp-507. Cys-875, Cys-950, Cys-957, and Cys-960 together coordinate Zn(2+).

It belongs to the RNA polymerase beta' chain family. The RNAP catalytic core consists of 2 alpha, 1 beta, 1 beta' and 1 omega subunit. When a sigma factor is associated with the core the holoenzyme is formed, which can initiate transcription. Mg(2+) serves as cofactor. It depends on Zn(2+) as a cofactor.

It catalyses the reaction RNA(n) + a ribonucleoside 5'-triphosphate = RNA(n+1) + diphosphate. Its function is as follows. DNA-dependent RNA polymerase catalyzes the transcription of DNA into RNA using the four ribonucleoside triphosphates as substrates. This chain is DNA-directed RNA polymerase subunit beta', found in Mycoplasma mycoides subsp. mycoides SC (strain CCUG 32753 / NCTC 10114 / PG1).